Consider the following 42-residue polypeptide: Large ribosomal subunit protein eL32 (42 aa).

The protein belongs to the eukaryotic ribosomal protein eL32 family.

The sequence is that of Large ribosomal subunit protein eL32 (RPL32) from Zea mays (Maize).